Reading from the N-terminus, the 134-residue chain is Putative pre-16S rRNA nuclease (134 aa).

Belongs to the YqgF nuclease family.

Its subcellular location is the cytoplasm. Its function is as follows. Could be a nuclease involved in processing of the 5'-end of pre-16S rRNA. This Helicobacter pylori (strain G27) protein is Putative pre-16S rRNA nuclease.